Reading from the N-terminus, the 260-residue chain is LOB domain-containing protein 6 (260 aa).

In terms of domain architecture, LOB spans 32–133 (SPCAACKFLR…QDLARAKYEL (102 aa)).

This sequence belongs to the LOB domain-containing protein family. In terms of assembly, interacts with RS2. Expressed in leaves, leaf primordia, immature ears, immature tassels, whole ovules, silk and husk leaves. Found on the adaxial side of organs.

Its subcellular location is the nucleus. Its function is as follows. Promotes the switch from proliferation to differentiation in the embryo sac. Negative regulator of cell proliferation in the adaxial side of leaves. Regulates the formation of a symmetric lamina and the establishment of venation. Interacts directly with RS2 (rough sheath 2) to repress some knox homeobox genes. The chain is LOB domain-containing protein 6 (LBD6) from Zea mays (Maize).